The chain runs to 177 residues: Large ribosomal subunit protein uL6 (177 aa).

It belongs to the universal ribosomal protein uL6 family. In terms of assembly, part of the 50S ribosomal subunit.

In terms of biological role, this protein binds to the 23S rRNA, and is important in its secondary structure. It is located near the subunit interface in the base of the L7/L12 stalk, and near the tRNA binding site of the peptidyltransferase center. This chain is Large ribosomal subunit protein uL6, found in Bradyrhizobium sp. (strain BTAi1 / ATCC BAA-1182).